We begin with the raw amino-acid sequence, 203 residues long: Glycerol-3-phosphate acyltransferase (203 aa).

The next 4 membrane-spanning stretches (helical) occupy residues 6-26, 82-102, 118-138, and 141-161; these read LTLL…AVLV, AISL…PIFF, APIG…LVLI, and YSSL…WWLD.

Belongs to the PlsY family. Probably interacts with PlsX.

It localises to the cell inner membrane. The enzyme catalyses an acyl phosphate + sn-glycerol 3-phosphate = a 1-acyl-sn-glycero-3-phosphate + phosphate. It functions in the pathway lipid metabolism; phospholipid metabolism. Functionally, catalyzes the transfer of an acyl group from acyl-phosphate (acyl-PO(4)) to glycerol-3-phosphate (G3P) to form lysophosphatidic acid (LPA). This enzyme utilizes acyl-phosphate as fatty acyl donor, but not acyl-CoA or acyl-ACP. This chain is Glycerol-3-phosphate acyltransferase, found in Shewanella sp. (strain MR-4).